Reading from the N-terminus, the 247-residue chain is tRNA (guanine-N(7)-)-methyltransferase (247 aa).

S-adenosyl-L-methionine is bound by residues G70, 93-94 (EI), 128-129 (NA), and L148. D151 is a catalytic residue. An S-adenosyl-L-methionine-binding site is contributed by 226-228 (SEE).

This sequence belongs to the class I-like SAM-binding methyltransferase superfamily. TrmB family.

It localises to the nucleus. It catalyses the reaction guanosine(46) in tRNA + S-adenosyl-L-methionine = N(7)-methylguanosine(46) in tRNA + S-adenosyl-L-homocysteine. It participates in tRNA modification; N(7)-methylguanine-tRNA biosynthesis. Its function is as follows. Catalyzes the formation of N(7)-methylguanine at position 46 (m7G46) in tRNA. The sequence is that of tRNA (guanine-N(7)-)-methyltransferase from Drosophila persimilis (Fruit fly).